The chain runs to 500 residues: Bifunctional protein GlmU (500 aa).

The tract at residues methionine 1–arginine 242 is pyrophosphorylase. UDP-N-acetyl-alpha-D-glucosamine contacts are provided by residues leucine 10–glycine 13, lysine 24, glutamine 81, and glycine 86–threonine 87. Position 112 (aspartate 112) interacts with Mg(2+). 4 residues coordinate UDP-N-acetyl-alpha-D-glucosamine: glycine 151, glutamate 167, asparagine 182, and asparagine 240. Asparagine 240 lines the Mg(2+) pocket. Residues valine 243–alanine 263 form a linker region. The tract at residues glycine 264–glutamine 500 is N-acetyltransferase. Positions 345 and 363 each coordinate UDP-N-acetyl-alpha-D-glucosamine. Residue histidine 375 is the Proton acceptor of the active site. UDP-N-acetyl-alpha-D-glucosamine is bound by residues tyrosine 378 and asparagine 389. Acetyl-CoA-binding positions include alanine 392, asparagine 398 to tyrosine 399, serine 417, and alanine 435. The tract at residues alanine 472–glutamine 500 is disordered. The segment covering histidine 482–glutamine 500 has biased composition (basic and acidic residues).

It in the N-terminal section; belongs to the N-acetylglucosamine-1-phosphate uridyltransferase family. The protein in the C-terminal section; belongs to the transferase hexapeptide repeat family. Homotrimer. Mg(2+) serves as cofactor.

It localises to the cytoplasm. The enzyme catalyses alpha-D-glucosamine 1-phosphate + acetyl-CoA = N-acetyl-alpha-D-glucosamine 1-phosphate + CoA + H(+). It catalyses the reaction N-acetyl-alpha-D-glucosamine 1-phosphate + UTP + H(+) = UDP-N-acetyl-alpha-D-glucosamine + diphosphate. It functions in the pathway nucleotide-sugar biosynthesis; UDP-N-acetyl-alpha-D-glucosamine biosynthesis; N-acetyl-alpha-D-glucosamine 1-phosphate from alpha-D-glucosamine 6-phosphate (route II): step 2/2. The protein operates within nucleotide-sugar biosynthesis; UDP-N-acetyl-alpha-D-glucosamine biosynthesis; UDP-N-acetyl-alpha-D-glucosamine from N-acetyl-alpha-D-glucosamine 1-phosphate: step 1/1. Its pathway is bacterial outer membrane biogenesis; LPS lipid A biosynthesis. Its function is as follows. Catalyzes the last two sequential reactions in the de novo biosynthetic pathway for UDP-N-acetylglucosamine (UDP-GlcNAc). The C-terminal domain catalyzes the transfer of acetyl group from acetyl coenzyme A to glucosamine-1-phosphate (GlcN-1-P) to produce N-acetylglucosamine-1-phosphate (GlcNAc-1-P), which is converted into UDP-GlcNAc by the transfer of uridine 5-monophosphate (from uridine 5-triphosphate), a reaction catalyzed by the N-terminal domain. The polypeptide is Bifunctional protein GlmU (Rhodococcus jostii (strain RHA1)).